We begin with the raw amino-acid sequence, 523 residues long: Probable lipid II flippase MurJ (523 aa).

Helical transmembrane passes span 98-118 (AFYS…IVYV), 146-166 (IMFG…ILNA), 170-190 (FGLP…FTFM), 201-221 (GLAW…AVAL), 246-266 (MLPG…NLYF), 284-304 (LLEL…LPTL), 328-348 (LFLA…IIEV), 360-380 (VQMT…VSCS), 395-415 (VPMV…PVLM), 422-442 (GLMI…MGLL), 461-481 (FVLA…LMAQ), and 489-509 (LALF…AYVL).

The protein belongs to the MurJ/MviN family.

The protein resides in the cell inner membrane. Its pathway is cell wall biogenesis; peptidoglycan biosynthesis. Functionally, involved in peptidoglycan biosynthesis. Transports lipid-linked peptidoglycan precursors from the inner to the outer leaflet of the cytoplasmic membrane. This Bdellovibrio bacteriovorus (strain ATCC 15356 / DSM 50701 / NCIMB 9529 / HD100) protein is Probable lipid II flippase MurJ.